A 325-amino-acid chain; its full sequence is GTP 3',8-cyclase (325 aa).

The region spanning 4 to 219 (NYNRNINYLR…HGLQQKFGLL (216 aa)) is the Radical SAM core domain. Arg13 lines the GTP pocket. 2 residues coordinate [4Fe-4S] cluster: Cys20 and Cys24. Tyr26 is an S-adenosyl-L-methionine binding site. [4Fe-4S] cluster is bound at residue Cys27. Arg63 serves as a coordination point for GTP. Gly67 contributes to the S-adenosyl-L-methionine binding site. Position 94 (Thr94) interacts with GTP. Ser118 contributes to the S-adenosyl-L-methionine binding site. Lys155 provides a ligand contact to GTP. An S-adenosyl-L-methionine-binding site is contributed by Met189. [4Fe-4S] cluster-binding residues include Cys254 and Cys257. A GTP-binding site is contributed by 259–261 (RLR). Residue Cys271 coordinates [4Fe-4S] cluster.

The protein belongs to the radical SAM superfamily. MoaA family. In terms of assembly, monomer and homodimer. [4Fe-4S] cluster is required as a cofactor.

It carries out the reaction GTP + AH2 + S-adenosyl-L-methionine = (8S)-3',8-cyclo-7,8-dihydroguanosine 5'-triphosphate + 5'-deoxyadenosine + L-methionine + A + H(+). It participates in cofactor biosynthesis; molybdopterin biosynthesis. In terms of biological role, catalyzes the cyclization of GTP to (8S)-3',8-cyclo-7,8-dihydroguanosine 5'-triphosphate. In Desulforamulus reducens (strain ATCC BAA-1160 / DSM 100696 / MI-1) (Desulfotomaculum reducens), this protein is GTP 3',8-cyclase.